Here is a 39-residue protein sequence, read N- to C-terminus: Photosystem II reaction center protein J (39 aa).

Residues 7-27 (IPLWVVAVIAGLGVIAVVGLF) traverse the membrane as a helical segment.

This sequence belongs to the PsbJ family. As to quaternary structure, PSII is composed of 1 copy each of membrane proteins PsbA, PsbB, PsbC, PsbD, PsbE, PsbF, PsbH, PsbI, PsbJ, PsbK, PsbL, PsbM, PsbT, PsbX, PsbY, PsbZ, Psb30/Ycf12, peripheral proteins PsbO, CyanoQ (PsbQ), PsbU, PsbV and a large number of cofactors. It forms dimeric complexes.

It localises to the cellular thylakoid membrane. One of the components of the core complex of photosystem II (PSII). PSII is a light-driven water:plastoquinone oxidoreductase that uses light energy to abstract electrons from H(2)O, generating O(2) and a proton gradient subsequently used for ATP formation. It consists of a core antenna complex that captures photons, and an electron transfer chain that converts photonic excitation into a charge separation. The chain is Photosystem II reaction center protein J from Gloeothece citriformis (strain PCC 7424) (Cyanothece sp. (strain PCC 7424)).